The primary structure comprises 500 residues: Cytochrome P450 726A27 (500 aa).

Residues 7–27 (IPSYPIIFSFFIFIFMLIKIW) traverse the membrane as a helical; Signal-anchor for type II membrane protein segment. Cys440 serves as a coordination point for heme.

Belongs to the cytochrome P450 family. Requires heme as cofactor. Expressed in mature seeds.

It localises to the membrane. It carries out the reaction (-)-casbene + reduced [NADPH--hemoprotein reductase] + O2 = 4-hydroxycasbene + oxidized [NADPH--hemoprotein reductase] + H2O + H(+). The catalysed reaction is 8-hydroxycasbene + reduced [NADPH--hemoprotein reductase] + O2 = 4,8-dihydroxycasbene + oxidized [NADPH--hemoprotein reductase] + H2O + H(+). The enzyme catalyses 4,8-dihydroxycasbene + reduced [NADPH--hemoprotein reductase] + O2 = 4,5,8-trihydroxycasbene + oxidized [NADPH--hemoprotein reductase] + H2O + H(+). It functions in the pathway secondary metabolite biosynthesis; terpenoid biosynthesis. Functionally, involved in the biosynthesis of macrocyclic lathyrane type diterpenoids (also called Euphorbia factors) natural products, including the cyclization route from casbene to jolkinol C, a precursor for ingenol mebutate that is used to treat actinic keratosis, a precancerous skin condition. Catalyzes the hydroxylation of (-)-casbene and 8-hydroxycasbene to produce 4-hydroxycasbene and 4,8-dihydroxycasbene, respectively. The polypeptide is Cytochrome P450 726A27 (Euphorbia lathyris (Caper spurge)).